Consider the following 247-residue polypeptide: Ribosomal RNA small subunit methyltransferase G (247 aa).

Residues Gly-84, Phe-89, 136 to 137, and Arg-155 each bind S-adenosyl-L-methionine; that span reads AE.

It belongs to the methyltransferase superfamily. RNA methyltransferase RsmG family.

The protein resides in the cytoplasm. Functionally, specifically methylates the N7 position of a guanine in 16S rRNA. This Prochlorococcus marinus (strain MIT 9303) protein is Ribosomal RNA small subunit methyltransferase G.